Here is a 397-residue protein sequence, read N- to C-terminus: Phosphoglycerate kinase (397 aa).

Substrate-binding positions include 25–27, R41, 64–67, R118, and R151; these read DLN and HLGR. ATP is bound by residues K202, E324, and 350–353; that span reads GGDT.

It belongs to the phosphoglycerate kinase family. In terms of assembly, monomer.

It localises to the cytoplasm. The catalysed reaction is (2R)-3-phosphoglycerate + ATP = (2R)-3-phospho-glyceroyl phosphate + ADP. It functions in the pathway carbohydrate degradation; glycolysis; pyruvate from D-glyceraldehyde 3-phosphate: step 2/5. In Janthinobacterium sp. (strain Marseille) (Minibacterium massiliensis), this protein is Phosphoglycerate kinase.